The chain runs to 182 residues: Adenine phosphoribosyltransferase (182 aa).

The protein belongs to the purine/pyrimidine phosphoribosyltransferase family. As to quaternary structure, homodimer.

The protein localises to the cytoplasm. It carries out the reaction AMP + diphosphate = 5-phospho-alpha-D-ribose 1-diphosphate + adenine. Its pathway is purine metabolism; AMP biosynthesis via salvage pathway; AMP from adenine: step 1/1. Its function is as follows. Catalyzes a salvage reaction resulting in the formation of AMP, that is energically less costly than de novo synthesis. The sequence is that of Adenine phosphoribosyltransferase from Bordetella avium (strain 197N).